Consider the following 133-residue polypeptide: Small ribosomal subunit protein bS16 (133 aa).

Residues 99-133 (EKWQQNQTERRQKRLAVKTRRRQAKKAAEAKGAEA) form a disordered region. The segment covering 109–123 (RQKRLAVKTRRRQAK) has biased composition (basic residues). The segment covering 124–133 (KAAEAKGAEA) has biased composition (basic and acidic residues).

This sequence belongs to the bacterial ribosomal protein bS16 family.

The polypeptide is Small ribosomal subunit protein bS16 (Chlorobium limicola (strain DSM 245 / NBRC 103803 / 6330)).